Here is a 159-residue protein sequence, read N- to C-terminus: MNNIPVTAFGAKALEAALLKLKDVSRPRIIEDIRIARAHGDLKENAEYHAAKEEQSFVEGRIKEIELKLSRMQIIDVTKLSQDGRCVFGTTITLMNSVDNSEITYQIVGEDEADISLDKISCHSPIASALMGNEEGDKVIVKAPKGDIVYKILSVEYYI.

A coiled-coil region spans residues 46–73; sequence AEYHAAKEEQSFVEGRIKEIELKLSRMQ.

Belongs to the GreA/GreB family.

Its function is as follows. Necessary for efficient RNA polymerase transcription elongation past template-encoded arresting sites. The arresting sites in DNA have the property of trapping a certain fraction of elongating RNA polymerases that pass through, resulting in locked ternary complexes. Cleavage of the nascent transcript by cleavage factors such as GreA or GreB allows the resumption of elongation from the new 3'terminus. GreA releases sequences of 2 to 3 nucleotides. The sequence is that of Transcription elongation factor GreA from Vesicomyosocius okutanii subsp. Calyptogena okutanii (strain HA).